An 861-amino-acid chain; its full sequence is Extra-large guanine nucleotide-binding protein 2 (861 aa).

Disordered regions lie at residues 1–32 and 121–168; these read MAAV…TSSG and VSGS…DDRV. Positions 131–143 are enriched in basic and acidic residues; sequence KRLDVPEEVKSPA. The segment covering 146–156 has biased composition (low complexity); that stretch reads RLSPSSPLSAS. Over residues 157–168 the composition is skewed to basic and acidic residues; it reads AREEDHLDDDRV. A Nuclear localization signal motif is present at residues 204–211; it reads RAERKGKR. An RING-type; degenerate zinc finger spans residues 214–257; that stretch reads CYRCQLGNRFTEKEVCIVCDAKYCFNCVRRAMGAMPEGRKCQAC. The G-alpha domain maps to 461–853; it reads MLNKLLLIGS…TSMFQEMSTT (393 aa). A G1 motif region spans residues 464 to 477; sequence KLLLIGSEKGGATT. 469 to 477 is a binding site for GTP; the sequence is GSEKGGATT. Residue T476 participates in Ca(2+) binding. Residues 523–545 are disordered; sequence EMSNDQSSGNVGDETSAKPGNSI. 624–632 is a binding site for GTP; that stretch reads DILQAEGLS. The interval 624–632 is G2 motif; that stretch reads DILQAEGLS. A Ca(2+)-binding site is contributed by S632. Residues 665 to 674 are G3 motif; sequence YQLIRLNPRS. Residues 737-744 form a G4 motif region; it reads LLVLTKFD. GTP is bound at residue 741 to 744; the sequence is TKFD. The interval 818–823 is G5 motif; the sequence is QVSLES.

Belongs to the G-alpha family. XLG subfamily. Interacts with GB1. Component of a G-protein complex at least composed of XLG2 and GB1. Interacts with RTV1. Ca(2+) serves as cofactor. Ubiquitous. Strongly expressed in vascular tissues, root and shoot meristems and lateral root primordia.

The protein localises to the nucleus. Functionally, guanine nucleotide-binding proteins (G proteins) are involved as modulators or transducers in various transmembrane signaling systems. Binds GTP with specificity. Plays a role in the root morphogenesis by regulation of the cell proliferation. Acts as a positive regulator in resistance to pathogen that triggers the salicylic acid (SA) pathway. Promotes the DNA binding activity of RTV1 specifically to promoter regions of FT and SOC1 in vivo leading to the activation of floral integrator genes. In Arabidopsis thaliana (Mouse-ear cress), this protein is Extra-large guanine nucleotide-binding protein 2 (XLG2).